A 307-amino-acid polypeptide reads, in one-letter code: Furaquinocin biosynthesis prenyltransferase (307 aa).

It belongs to the aromatic prenyltransferase family. As to quaternary structure, monomer.

It catalyses the reaction 2-O,3-dimethylflaviolin + (2E)-geranyl diphosphate = 6-linalyl-2-O,3-dimethylflaviolin + diphosphate. The catalysed reaction is 2-O,3-dimethylflaviolin + (2E)-geranyl diphosphate + H(+) = 7-O-geranyl-2-O,3-dimethylflaviolin + diphosphate. Does not require any metal cations for activity. Involved in the biosynthesis of furaquinocin. Catalyzes the transfer of a geranyl group to 2-methoxy-3-methyl-flaviolin to yield 6-prenyl-2-methoxy-3-methyl-flaviolin and 7-O-geranyl-2-methoxy-3-methyl-flaviolin in a 10:1 ratio. Can also use other substrates such as flaviolin or 1,3-dihydroxy naphthalene, and can also use DMAPP as prenyl donor. In Streptomyces sp. (strain KO-3988), this protein is Furaquinocin biosynthesis prenyltransferase.